The chain runs to 412 residues: Gamma-glutamyl phosphate reductase (412 aa).

This sequence belongs to the gamma-glutamyl phosphate reductase family.

The protein resides in the cytoplasm. The enzyme catalyses L-glutamate 5-semialdehyde + phosphate + NADP(+) = L-glutamyl 5-phosphate + NADPH + H(+). It functions in the pathway amino-acid biosynthesis; L-proline biosynthesis; L-glutamate 5-semialdehyde from L-glutamate: step 2/2. Catalyzes the NADPH-dependent reduction of L-glutamate 5-phosphate into L-glutamate 5-semialdehyde and phosphate. The product spontaneously undergoes cyclization to form 1-pyrroline-5-carboxylate. This Bartonella bacilliformis (strain ATCC 35685 / KC583 / Herrer 020/F12,63) protein is Gamma-glutamyl phosphate reductase.